Consider the following 153-residue polypeptide: MSQEIRAIVRIGDTDLDGNKQVAYSLTKIRGIGIATAYAICRKLGIDPHAILGALSEEQINKLDWAVRNLHELAPAWFLNRRKDPETGKDLHLIGAELVLAAKRDVDLMKKLKSWKGVRHSLGLKVRGQRTVTTGRLGPVAGVTKKKAAAGGK.

The protein belongs to the universal ribosomal protein uS13 family. In terms of assembly, part of the 30S ribosomal subunit. Forms a loose heterodimer with protein S19. Forms two bridges to the 50S subunit in the 70S ribosome.

Its function is as follows. Located at the top of the head of the 30S subunit, it contacts several helices of the 16S rRNA. In the 70S ribosome it contacts the 23S rRNA (bridge B1a) and protein L5 of the 50S subunit (bridge B1b), connecting the 2 subunits; these bridges are implicated in subunit movement. This Pyrobaculum islandicum (strain DSM 4184 / JCM 9189 / GEO3) protein is Small ribosomal subunit protein uS13.